Reading from the N-terminus, the 572-residue chain is Thiamine biosynthesis protein THI22 (572 aa).

An N-terminal signal peptide occupies residues Met-1–Cys-19.

This sequence belongs to the thiaminase-2 family.

Its subcellular location is the secreted. Is not required for thiamine biosynthesis. The chain is Thiamine biosynthesis protein THI22 (THI22) from Saccharomyces cerevisiae (strain ATCC 204508 / S288c) (Baker's yeast).